The primary structure comprises 504 residues: MKKTEMGRFNISPDEDSSSYSSNGDFNYSYPTKQAALKSHYVDVDPENQNFLLESNLGKKKYETDFHPGTTSFGMSVFNLSNAIVGSGILGLSYAMANTGIALFIILLTFVSIFSLYSVHLLLKTANEGGSLLYEQLGHKAYGLAGKLAASGSITMQNIGAMSSYLFIVKYELPLVIKALMNIEDTNGLWYLNGDYLVLLVSFVLILPLSLLRNLGYLGYTSGLSLLCMIFFLIVVICKKFQIPCPVEVALMANETVNGTFTQVALAALASNSTAADTCRPRYFIFNSQTVYAVPILTFSFVCHPAVLPIYEELKSRSRRRMMNVSKISFFAMFLMYLLAALFGYLTFYEHVESELLHTYSAIVGTDILLLVVRLAVLVAVTLTVPVVIFPIRSSVTHLLCPTKEFSWFRHSVITVTILAFTNLLVIFVPTIRDIFGFIGASAAAMLIFILPSAFYIKLVKKEPMRSVQKIGALCFLLSGVVVMIGSMGLIVLDWVHDASAGGH.

The disordered stretch occupies residues methionine 1–serine 22. The Cytoplasmic segment spans residues methionine 1 to serine 76. The tract at residues methionine 1–methionine 96 is regulates protein turnover upon amino acid deprivation. Residues serine 12, serine 21, serine 22, and serine 55 each carry the phosphoserine modification. Residues valine 77–methionine 96 traverse the membrane as a helical segment. Position 82 (asparagine 82) interacts with Na(+). Topologically, residues alanine 97 to alanine 102 are extracellular. A helical membrane pass occupies residues leucine 103–leucine 123. The Cytoplasmic segment spans residues lysine 124–asparagine 158. The chain crosses the membrane as a helical span at residues isoleucine 159 to isoleucine 177. The Extracellular segment spans residues lysine 178–glycine 188. The chain crosses the membrane as a helical span at residues leucine 189–leucine 209. The Cytoplasmic segment spans residues serine 210–tyrosine 217. A helical membrane pass occupies residues leucine 218–cysteine 238. Over lysine 239–threonine 290 the chain is Extracellular. Cysteine 245 and cysteine 279 are joined by a disulfide. N-linked (GlcNAc...) asparagine glycosylation is found at asparagine 254, asparagine 258, and asparagine 272. A helical transmembrane segment spans residues valine 291 to tyrosine 311. The Cytoplasmic segment spans residues glutamate 312 to lysine 327. A helical transmembrane segment spans residues isoleucine 328–phenylalanine 348. The Extracellular segment spans residues tyrosine 349–leucine 369. A helical membrane pass occupies residues leucine 370–phenylalanine 390. Threonine 384 serves as a coordination point for Na(+). Topologically, residues proline 391–histidine 411 are cytoplasmic. Residues serine 412–isoleucine 432 form a helical membrane-spanning segment. Residues arginine 433 to aspartate 434 are Extracellular-facing. The chain crosses the membrane as a helical span at residues isoleucine 435–phenylalanine 455. Over tyrosine 456 to lysine 470 the chain is Cytoplasmic. Residues isoleucine 471–leucine 493 traverse the membrane as a helical segment. Over aspartate 494–histidine 504 the chain is Extracellular.

This sequence belongs to the amino acid/polyamine transporter 2 family. Polyubiquitination by NEDD4L regulates the degradation and the activity of SLC38A2. In terms of tissue distribution, widely expressed. Expressed in skeletal muscle and adipose tissue (at protein level). Expressed by glutamatergic and GABAergic neurons together with astrocytes and other non-neuronal cells in the cerebral cortex (at protein level). Widely expressed in the central nervous systeme where, it is enriched in the spinal cord and the brainstem nuclei, especially those of the auditory system.

It is found in the cell membrane. It carries out the reaction L-alanine(in) + Na(+)(in) = L-alanine(out) + Na(+)(out). It catalyses the reaction glycine(in) + Na(+)(in) = glycine(out) + Na(+)(out). The enzyme catalyses L-serine(in) + Na(+)(in) = L-serine(out) + Na(+)(out). The catalysed reaction is L-proline(in) + Na(+)(in) = L-proline(out) + Na(+)(out). It carries out the reaction L-methionine(in) + Na(+)(in) = L-methionine(out) + Na(+)(out). It catalyses the reaction L-histidine(in) + Na(+)(in) = L-histidine(out) + Na(+)(out). The enzyme catalyses L-asparagine(in) + Na(+)(in) = L-asparagine(out) + Na(+)(out). The catalysed reaction is L-glutamine(in) + Na(+)(in) = L-glutamine(out) + Na(+)(out). It carries out the reaction L-threonine(in) + Na(+)(in) = L-threonine(out) + Na(+)(out). It catalyses the reaction L-leucine(in) + Na(+)(in) = L-leucine(out) + Na(+)(out). The enzyme catalyses L-phenylalanine(in) + Na(+)(in) = L-phenylalanine(out) + Na(+)(out). Inhibited by N-methyl-D-glucamine. Inhibited by choline. Allosteric regulation of sodium ions binding by pH. In terms of biological role, symporter that cotransports neutral amino acids and sodium ions from the extracellular to the intracellular side of the cell membrane. The transport is pH-sensitive, Li(+)-intolerant, electrogenic, driven by the Na(+) electrochemical gradient and cotransports of neutral amino acids and sodium ions with a stoichiometry of 1:1. May function in the transport of amino acids at the blood-brain barrier. May function in the transport of amino acids in the supply of maternal nutrients to the fetus through the placenta. Maintains a key metabolic glutamine/glutamate balance underpinning retrograde signaling by dendritic release of the neurotransmitter glutamate. Transports L-proline in differentiating osteoblasts for the efficient synthesis of proline-enriched proteins and provides proline essential for osteoblast differentiation and bone formation during bone development. The polypeptide is Sodium-coupled neutral amino acid symporter 2 (Rattus norvegicus (Rat)).